The chain runs to 407 residues: PWWP domain-containing protein 3 (407 aa).

The disordered stretch occupies residues 1-46 (MMVARTRSQKRKLEEINNQKKIKTKKKATGQQTSNTKNLRDVKKKG). The PWWP domain maps to 63-129 (NGEYVLAKMS…SSNVLPLTVD (67 aa)). A phosphoserine mark is found at Ser-160 and Ser-162. A disordered region spans residues 163–248 (DVEEDEFEPE…PIPSPKKTAK (86 aa)). Residues 172-208 (ENTRKKLQKPIEKPKKEKIEATPKIDGGKRLKNEKSS) show a composition bias toward basic and acidic residues. A phosphoserine mark is found at Ser-236, Ser-238, and Ser-242.

As to quaternary structure, component of the mst2 complex composed of at least eaf6, mst2, nto1, pdp3, ptf1, ptf2 and tfg3.

The protein localises to the nucleus. In terms of biological role, component of the mst2 complex which is a highly specific H3 lysine 14 (H3K14) acetyltransferase that functions together with gcn5 to regulate global levels of H3K14 acetylation (H3K14ac), critical for DNA damage checkpoint activation. This is PWWP domain-containing protein 3 (pdp3) from Schizosaccharomyces pombe (strain 972 / ATCC 24843) (Fission yeast).